Reading from the N-terminus, the 911-residue chain is MVDYHAANQSYQYGPSSGSNGAGGGGTMGDYMAQEDDWDRDLLLDPAWEKQQRKTFTAWCNSHLRKAGTQIENIDEDFRDGLKLMLLLEVISGERLPKPERGKMRVHKINNVNKALDFIASKGVKLVSIGAEEIVDGNAKMTLGMIWTIILRFAIQDISVEETSAKEGLLLWCQRKTAPYKNVNVQNFHISWKDGLAFNALIHRHRPELIEYDKLRKDDPVTNLNNAFEVAEKYLDIPKMLDAEDIVNTARPDEKAIMTYVSSFYHAFSGAQKAETAANRICKVLAVNQENEHLMEDYERLASDLLEWIRRTIPWLEDRVPQKTIQEMQQKLEDFRDYRRVHKPPKVQEKCQLEINFNTLQTKLRLSNRPAFMPSEGKMVSDINNGWQHLEQAEKGYEEWLLNEIRRLERLDHLAEKFRQKASIHEAWTDGKEAMLKHRDYETATLSDIKALIRKHEAFESDLAAHQDRVEQIAAIAQELNELDYYDSHNVNTRCQKICDQWDALGSLTHSRREALEKTEKQLETIDQLHLEYAKRAAPFNNWMESAMEDLQDMFIVHTIEEIEGLISAHDQFKSTLPDADREREAILAIHKEAQRIAESNHIKLSGSNPYTTVTPQIINSKWEKVQQLVPKRDHALLEEQSKQQSNEHLRRQFASQANIVGPWIQTKMEEIGRISIEMNGTLEDQLSHLKQYERSIVDYKPNLDLLEQQHQLIQEALIFDNKHTNYTMEHIRVGWEQLLTTIARTINEVENQILTRDAKGISQEQMQEFRASFNHFDKDHGGALGPEEFKACLISLGYDVENDRQGDAEFNRIMSVVDPNHSGLVTFQAFIDFMSRETTDTDTADQVIASFKVLAGDKNFITAEELRRELPPDQAEYCIARMAPYQGPDAVPGALDYKSFSTALYGESDL.

Residues 1–269 (MVDYHAANQS…YVSSFYHAFS (269 aa)) form an actin-binding region. The interval 8–31 (NQSYQYGPSSGSNGAGGGGTMGDY) is disordered. An interaction with VCL region spans residues 12-26 (QYGPSSGSNGAGGGG). At Tyr-31 the chain carries Phosphotyrosine. An interaction with VCL region spans residues 40–61 (RDLLLDPAWEKQQRKTFTAWCN). Calponin-homology (CH) domains lie at 50–154 (KQQR…LRFA) and 163–269 (TSAK…HAFS). The LXXLL motif motif lies at 84 to 88 (LMLLL). Residues 108–126 (KINNVNKALDFIASKGVKL) form an interaction with VCL region. Lys-114 carries the N6-acetyllysine modification. Positions 177 to 192 (TAPYKNVNVQNFHISW) are polyphosphoinositide (PIP2)-binding. At Lys-214 the chain carries N6-acetyllysine. A Phosphothreonine modification is found at Thr-249. Spectrin repeat units follow at residues 293–403 (HLME…WLLN), 413–518 (HLAE…ALEK), 528–639 (QLHL…ALLE), and 649–752 (HLRR…EVEN). N6-acetyllysine occurs at positions 592 and 625. Residue Ser-696 is modified to Phosphoserine. The interval 736-911 (WEQLLTTIAR…STALYGESDL (176 aa)) is mediates interaction with MICALL2. 2 EF-hand domains span residues 765 to 800 (EQMQ…LGYD) and 806 to 841 (QGDA…ETTD). Asp-778 lines the Ca(2+) pocket. N6-acetyllysine is present on Lys-779. The Ca(2+) site is built by Asp-780 and Glu-789. An N6-acetyllysine modification is found at Lys-859. At Ser-909 the chain carries Phosphoserine.

The protein belongs to the alpha-actinin family. As to quaternary structure, homodimer; antiparallel. Identified in a IGF2BP1-dependent mRNP granule complex containing untranslated mRNAs. Component of the CART complex, at least composed of ACTN4, HGS/HRS, MYO5B and TRIM3. Binds TRIM3 at the N-terminus. Interacts with MAGI1. Interacts with PDLIM2. Identified in a complex with CASK, IQGAP1, MAGI2, NPHS1, SPTAN1 and SPTBN1. Interacts with MICALL2 (preferentially in opened conformation); stimulated by RAB13 activation. Interacts with PPARG and RARA. Binds to VCL; this interaction triggers VCL conformational changes. Interacts with SEPTIN14. Interacts with IGSF8.

The protein resides in the nucleus. Its subcellular location is the cytoplasm. It localises to the cell junction. The protein localises to the cytoskeleton. It is found in the stress fiber. The protein resides in the perinuclear region. Functionally, F-actin cross-linking protein which is thought to anchor actin to a variety of intracellular structures. This is a bundling protein. Probably involved in vesicular trafficking via its association with the CART complex. The CART complex is necessary for efficient transferrin receptor recycling but not for EGFR degradation. Involved in tight junction assembly in epithelial cells probably through interaction with MICALL2. Links MICALL2 to the actin cytoskeleton and recruits it to the tight junctions. May also function as a transcriptional coactivator, stimulating transcription mediated by the nuclear hormone receptors PPARG and RARA. Association with IGSF8 regulates the immune synapse formation and is required for efficient T-cell activation. In Bos taurus (Bovine), this protein is Alpha-actinin-4.